The primary structure comprises 467 residues: ATP synthase subunit beta (467 aa).

Residue 150 to 157 (GGAGVGKT) participates in ATP binding.

Belongs to the ATPase alpha/beta chains family. As to quaternary structure, F-type ATPases have 2 components, CF(1) - the catalytic core - and CF(0) - the membrane proton channel. CF(1) has five subunits: alpha(3), beta(3), gamma(1), delta(1), epsilon(1). CF(0) has three main subunits: a(1), b(2) and c(9-12). The alpha and beta chains form an alternating ring which encloses part of the gamma chain. CF(1) is attached to CF(0) by a central stalk formed by the gamma and epsilon chains, while a peripheral stalk is formed by the delta and b chains.

It is found in the cell inner membrane. It carries out the reaction ATP + H2O + 4 H(+)(in) = ADP + phosphate + 5 H(+)(out). Functionally, produces ATP from ADP in the presence of a proton gradient across the membrane. The catalytic sites are hosted primarily by the beta subunits. The chain is ATP synthase subunit beta from Vibrio alginolyticus.